The chain runs to 302 residues: Ribosomal RNA small subunit methyltransferase H (302 aa).

S-adenosyl-L-methionine contacts are provided by residues 32–34, aspartate 51, phenylalanine 78, aspartate 97, and glutamine 104; that span reads GGH.

It belongs to the methyltransferase superfamily. RsmH family.

It localises to the cytoplasm. The catalysed reaction is cytidine(1402) in 16S rRNA + S-adenosyl-L-methionine = N(4)-methylcytidine(1402) in 16S rRNA + S-adenosyl-L-homocysteine + H(+). Its function is as follows. Specifically methylates the N4 position of cytidine in position 1402 (C1402) of 16S rRNA. This Nitratiruptor sp. (strain SB155-2) protein is Ribosomal RNA small subunit methyltransferase H.